Reading from the N-terminus, the 58-residue chain is Large ribosomal subunit protein bL32c (58 aa).

Disordered stretches follow at residues 1–21 (MAVP…SQWM) and 34–58 (LAGR…MQPN). Residues 44-58 (QMQPTQMQPTQMQPN) show a composition bias toward low complexity.

It belongs to the bacterial ribosomal protein bL32 family.

It localises to the plastid. The protein localises to the chloroplast. The chain is Large ribosomal subunit protein bL32c from Cyanidioschyzon merolae (strain NIES-3377 / 10D) (Unicellular red alga).